The chain runs to 633 residues: Biosynthetic arginine decarboxylase (633 aa).

Residue Lys-101 is modified to N6-(pyridoxal phosphate)lysine. Val-284–Tyr-294 lines the substrate pocket.

It belongs to the Orn/Lys/Arg decarboxylase class-II family. SpeA subfamily. Mg(2+) is required as a cofactor. It depends on pyridoxal 5'-phosphate as a cofactor.

The catalysed reaction is L-arginine + H(+) = agmatine + CO2. Its pathway is amine and polyamine biosynthesis; agmatine biosynthesis; agmatine from L-arginine: step 1/1. In terms of biological role, catalyzes the biosynthesis of agmatine from arginine. The protein is Biosynthetic arginine decarboxylase of Aeromonas hydrophila subsp. hydrophila (strain ATCC 7966 / DSM 30187 / BCRC 13018 / CCUG 14551 / JCM 1027 / KCTC 2358 / NCIMB 9240 / NCTC 8049).